The sequence spans 416 residues: Phosphatidylinositol 5-phosphate 4-kinase type-2 beta (416 aa).

Residue S2 is modified to N-acetylserine. A Phosphothreonine modification is found at T8. The residue at position 19 (S19) is a Phosphoserine. One can recognise a PIPK domain in the interval A38–L415. The segment at V64–D70 is required for interaction with PIP5K1A. Residues K94 and K150 each carry the N6-acetyllysine modification. ATP-binding positions include R202–V204 and K214. GTP-binding positions include N203–V204 and K214. The residue at position 322 (T322) is a Phosphothreonine. At S326 the chain carries Phosphoserine. Residue D369 participates in GTP binding.

As to quaternary structure, homodimer. Binds TNFRSF1A. Interacts with PIP4K2A; the interaction suppresses ubiquitination by the SPOP/CUL3 complex. Probably interacts with PIP5K1A; the interaction inhibits PIP5K1A kinase activity. Post-translationally, ubiquitinated by the SPOP/CUL3 complex. Ubiquitination is stimulated by PtdIns5P levels. Phosphorylated on serine residues.

The protein localises to the endoplasmic reticulum membrane. The protein resides in the cell membrane. It localises to the nucleus. Its subcellular location is the cytoplasm. It carries out the reaction a 1,2-diacyl-sn-glycero-3-phospho-(1D-myo-inositol-5-phosphate) + ATP = a 1,2-diacyl-sn-glycero-3-phospho-(1D-myo-inositol-4,5-bisphosphate) + ADP + H(+). The enzyme catalyses 1,2-dihexadecanoyl-sn-glycero-3-phospho-(1D-myo-inositol-5-phosphate) + ATP = 1,2-dihexadecanoyl-sn-glycero-3-phospho-(1D-myo-inositol-4,5-bisphosphate) + ADP + H(+). The catalysed reaction is 1,2-dihexadecanoyl-sn-glycero-3-phospho-(1D-myo-inositol-5-phosphate) + GTP = 1,2-dihexadecanoyl-sn-glycero-3-phospho-(1D-myo-inositol-4,5-bisphosphate) + GDP + H(+). In terms of biological role, participates in the biosynthesis of phosphatidylinositol 4,5-bisphosphate. Preferentially utilizes GTP, rather than ATP, for PI(5)P phosphorylation and its activity reflects changes in direct proportion to the physiological GTP concentration. Its GTP-sensing activity is critical for metabolic adaptation. In collaboration with PIP4K2A, has a role in mediating autophagy in times of nutrient stress. Required for autophagosome-lysosome fusion and the regulation of cellular lipid metabolism. PIP4Ks negatively regulate insulin signaling through a catalytic-independent mechanism. They interact with PIP5Ks and suppress PIP5K-mediated PtdIns(4,5)P2 synthesis and insulin-dependent conversion to PtdIns(3,4,5)P3. The sequence is that of Phosphatidylinositol 5-phosphate 4-kinase type-2 beta from Mus musculus (Mouse).